A 269-amino-acid polypeptide reads, in one-letter code: Adenosylcobinamide-GDP ribazoletransferase (269 aa).

Transmembrane regions (helical) follow at residues 63-83 (SAYY…LLYL), 87-107 (LPPG…TGML), 137-157 (VGAF…SLLG), 158-178 (AGLP…VVLM), 202-222 (LAFL…AALV), and 246-266 (VYGL…GWGF).

This sequence belongs to the CobS family. It depends on Mg(2+) as a cofactor.

Its subcellular location is the cell membrane. It catalyses the reaction alpha-ribazole + adenosylcob(III)inamide-GDP = adenosylcob(III)alamin + GMP + H(+). The enzyme catalyses alpha-ribazole 5'-phosphate + adenosylcob(III)inamide-GDP = adenosylcob(III)alamin 5'-phosphate + GMP + H(+). It participates in cofactor biosynthesis; adenosylcobalamin biosynthesis; adenosylcobalamin from cob(II)yrinate a,c-diamide: step 7/7. Functionally, joins adenosylcobinamide-GDP and alpha-ribazole to generate adenosylcobalamin (Ado-cobalamin). Also synthesizes adenosylcobalamin 5'-phosphate from adenosylcobinamide-GDP and alpha-ribazole 5'-phosphate. This chain is Adenosylcobinamide-GDP ribazoletransferase, found in Deinococcus radiodurans (strain ATCC 13939 / DSM 20539 / JCM 16871 / CCUG 27074 / LMG 4051 / NBRC 15346 / NCIMB 9279 / VKM B-1422 / R1).